A 187-amino-acid polypeptide reads, in one-letter code: Peptide deformylase (187 aa).

2 residues coordinate Fe cation: Cys114 and His157. Glu158 is an active-site residue. His161 serves as a coordination point for Fe cation.

It belongs to the polypeptide deformylase family. Fe(2+) is required as a cofactor.

The catalysed reaction is N-terminal N-formyl-L-methionyl-[peptide] + H2O = N-terminal L-methionyl-[peptide] + formate. Functionally, removes the formyl group from the N-terminal Met of newly synthesized proteins. Requires at least a dipeptide for an efficient rate of reaction. N-terminal L-methionine is a prerequisite for activity but the enzyme has broad specificity at other positions. The chain is Peptide deformylase from Enterococcus faecalis (strain ATCC 700802 / V583).